We begin with the raw amino-acid sequence, 740 residues long: N-acetylated-alpha-linked acidic dipeptidase 2 (740 aa).

The Cytoplasmic portion of the chain corresponds to 1–7 (MARPRHL). A helical; Signal-anchor for type II membrane protein membrane pass occupies residues 8-31 (RGLGMCITAVLASFIAGFTVGWFI). Over 32–740 (KPLKETTTSA…AAAGTLTNVL (709 aa)) the chain is Extracellular. N-linked (GlcNAc...) asparagine glycosylation is found at Asn-111, Asn-143, and Asn-185. Substrate contacts are provided by Arg-200 and Asn-247. Residues Thr-259 and Tyr-262 each contribute to the Ca(2+) site. The interval 264–577 (AKEYTFRLPV…QLRGALVYEL (314 aa)) is NAALADase. N-linked (GlcNAc...) asparagine glycosylation is present at Asn-314. Positions 367 and 377 each coordinate Zn(2+). Position 414 (Glu-414) interacts with substrate. Glu-414 (nucleophile; for NAALADase activity) is an active-site residue. Zn(2+) is bound at residue Glu-415. Ca(2+) is bound by residues Glu-423 and Glu-426. Asp-443 contacts Zn(2+). Asn-449 is a glycosylation site (N-linked (GlcNAc...) asparagine). Substrate-binding positions include 507–508 (SG), 524–526 (RAR), Tyr-542, and 542–543 (YH). A Zn(2+)-binding site is contributed by His-543. Asn-603 carries N-linked (GlcNAc...) asparagine glycosylation. Ser-618 (charge relay system) is an active-site residue. Asn-628 carries N-linked (GlcNAc...) asparagine glycosylation. Catalysis depends on charge relay system residues Asp-656 and His-679. 689 to 690 (KY) is a binding site for substrate.

It belongs to the peptidase M28 family. M28B subfamily. As to quaternary structure, homodimer. Requires Zn(2+) as cofactor. In terms of tissue distribution, expressed ovary, testes and lung, but not brain.

The protein localises to the cell membrane. The catalysed reaction is Release of an unsubstituted, C-terminal glutamyl residue, typically from Ac-Asp-Glu or folylpoly-gamma-glutamates.. Functionally, has N-acetylated-alpha-linked-acidic dipeptidase (NAALADase) activity. Also exhibits a dipeptidyl-peptidase IV type activity. Inactivates the peptide neurotransmitter N-acetylaspartylglutamate. The chain is N-acetylated-alpha-linked acidic dipeptidase 2 (Naalad2) from Mus musculus (Mouse).